Here is a 517-residue protein sequence, read N- to C-terminus: GMP synthase [glutamine-hydrolyzing] (517 aa).

The Glutamine amidotransferase type-1 domain occupies 11–202 (KIIVLDYGSQ…AFGVCGAQDN (192 aa)). Catalysis depends on Cys-88, which acts as the Nucleophile. Catalysis depends on residues His-176 and Glu-178. The region spanning 203 to 392 (WTMNDFIDMQ…LGMPYELVWR (190 aa)) is the GMPS ATP-PPase domain. 230 to 236 (SGGVDSS) lines the ATP pocket.

As to quaternary structure, homodimer.

It carries out the reaction XMP + L-glutamine + ATP + H2O = GMP + L-glutamate + AMP + diphosphate + 2 H(+). Its pathway is purine metabolism; GMP biosynthesis; GMP from XMP (L-Gln route): step 1/1. Functionally, catalyzes the synthesis of GMP from XMP. This chain is GMP synthase [glutamine-hydrolyzing], found in Latilactobacillus sakei subsp. sakei (strain 23K) (Lactobacillus sakei subsp. sakei).